The sequence spans 457 residues: ATP synthase subunit beta (457 aa).

147–154 contributes to the ATP binding site; sequence GGAGVGKT.

It belongs to the ATPase alpha/beta chains family. In terms of assembly, F-type ATPases have 2 components, CF(1) - the catalytic core - and CF(0) - the membrane proton channel. CF(1) has five subunits: alpha(3), beta(3), gamma(1), delta(1), epsilon(1). CF(0) has three main subunits: a(1), b(2) and c(9-12). The alpha and beta chains form an alternating ring which encloses part of the gamma chain. CF(1) is attached to CF(0) by a central stalk formed by the gamma and epsilon chains, while a peripheral stalk is formed by the delta and b chains.

Its subcellular location is the cell inner membrane. The enzyme catalyses ATP + H2O + 4 H(+)(in) = ADP + phosphate + 5 H(+)(out). In terms of biological role, produces ATP from ADP in the presence of a proton gradient across the membrane. The catalytic sites are hosted primarily by the beta subunits. The protein is ATP synthase subunit beta of Actinobacillus pleuropneumoniae serotype 5b (strain L20).